A 152-amino-acid polypeptide reads, in one-letter code: NADH-quinone oxidoreductase subunit I 1 (152 aa).

4Fe-4S ferredoxin-type domains lie at Met-53 to Asp-83 and Val-94 to Gly-123. Residues Cys-63, Cys-66, Cys-69, Cys-73, Cys-103, Cys-106, Cys-109, and Cys-113 each coordinate [4Fe-4S] cluster.

It belongs to the complex I 23 kDa subunit family. As to quaternary structure, NDH-1 is composed of 14 different subunits. Subunits NuoA, H, J, K, L, M, N constitute the membrane sector of the complex. [4Fe-4S] cluster serves as cofactor.

It localises to the cell inner membrane. It carries out the reaction a quinone + NADH + 5 H(+)(in) = a quinol + NAD(+) + 4 H(+)(out). In terms of biological role, NDH-1 shuttles electrons from NADH, via FMN and iron-sulfur (Fe-S) centers, to quinones in the respiratory chain. The immediate electron acceptor for the enzyme in this species is believed to be ubiquinone. Couples the redox reaction to proton translocation (for every two electrons transferred, four hydrogen ions are translocated across the cytoplasmic membrane), and thus conserves the redox energy in a proton gradient. This chain is NADH-quinone oxidoreductase subunit I 1, found in Koribacter versatilis (strain Ellin345).